A 154-amino-acid polypeptide reads, in one-letter code: Ribonuclease H (154 aa).

Positions 9–150 constitute an RNase H type-1 domain; sequence SHPHIIIYTD…ADALANKGVE (142 aa). 4 residues coordinate Mg(2+): Asp-18, Glu-56, Asp-78, and Asp-142.

Belongs to the RNase H family. Monomer. It depends on Mg(2+) as a cofactor.

The protein resides in the cytoplasm. The catalysed reaction is Endonucleolytic cleavage to 5'-phosphomonoester.. Its function is as follows. Endonuclease that specifically degrades the RNA of RNA-DNA hybrids. The sequence is that of Ribonuclease H from Polynucleobacter asymbioticus (strain DSM 18221 / CIP 109841 / QLW-P1DMWA-1) (Polynucleobacter necessarius subsp. asymbioticus).